The primary structure comprises 722 residues: PAB1-binding protein 1 (722 aa).

A compositionally biased stretch (basic and acidic residues) spans Met1–Ser10. The segment at Met1–Phe38 is disordered. The segment covering Ser11–Phe38 has biased composition (polar residues). The Sm domain maps to Arg51–Val107. Ser106 is modified (phosphoserine). A Phosphothreonine modification is found at Thr193. Ser215 carries the post-translational modification Phosphoserine. 3 disordered regions span residues Ala305–Lys380, Ser412–Thr488, and Gly683–Lys722. Composition is skewed to low complexity over residues Lys307 to Lys316, Ser338 to Asn347, Pro356 to Thr370, and Ser412 to Leu421. Lys344 participates in a covalent cross-link: Glycyl lysine isopeptide (Lys-Gly) (interchain with G-Cter in ubiquitin). Positions Thr429–Ile455 are enriched in polar residues. Position 436 is a phosphoserine (Ser436). A compositionally biased stretch (low complexity) spans Ser456–Ser471. The segment covering Ser698 to Lys722 has biased composition (basic residues).

Belongs to the ataxin-2 family. Interacts (via C-terminus) with MKT1 (via C-terminus). Interacts with FIR1, IGO1, LSM12, PBP4 and PAB1.

It is found in the cytoplasm. The protein localises to the nucleus. It localises to the mitochondrion. In terms of biological role, involved in pre-mRNA polyadenylation. May act to repress the ability of PAB1 to negatively regulate polyadenylation. Negative regulator of poly(A) nuclease (PAN) activity. Promotes mating-type switching in mother cells by positively regulating HO mRNA translation. Localizes MKT1 to polysomes. The chain is PAB1-binding protein 1 (PBP1) from Saccharomyces cerevisiae (strain ATCC 204508 / S288c) (Baker's yeast).